Here is a 286-residue protein sequence, read N- to C-terminus: MRVLPRLLLLLLLAFPAAVLLRGGPGGSLVAAQDLTEDEETVEDSIIEDEDDEAEVEEDEPTDLAEDKEEEDVSGEPEASPSADTTILFVKGEDFPANNIVKFLVGFTNKGTEDFIVESLDASFRYPQDYQFYIQNFTALPLNTVVPPQRQATFEYSFIPAEPMGGRPFGLVINLNYKDLNGNVFQDAVFNQTVTIIEREDGLDGETIFMYMFLAGLGLLVVVGLHQLLESRKRKRPIQKVEMGTSSQNDVDMSWIPQETLNQINKASPRRLPRKRAQKRSVGSDE.

Residues 1-23 form the signal peptide; the sequence is MRVLPRLLLLLLLAFPAAVLLRG. Residues 24 to 207 lie on the Lumenal side of the membrane; that stretch reads GPGGSLVAAQ…EREDGLDGET (184 aa). A compositionally biased stretch (acidic residues) spans 37-75; the sequence is EDEETVEDSIIEDEDDEAEVEEDEPTDLAEDKEEEDVSG. The tract at residues 37–83 is disordered; sequence EDEETVEDSIIEDEDDEAEVEEDEPTDLAEDKEEEDVSGEPEASPSA. Residues Asn-136 and Asn-191 are each glycosylated (N-linked (GlcNAc...) asparagine). The chain crosses the membrane as a helical span at residues 208-228; that stretch reads IFMYMFLAGLGLLVVVGLHQL. Topologically, residues 229–286 are cytoplasmic; sequence LESRKRKRPIQKVEMGTSSQNDVDMSWIPQETLNQINKASPRRLPRKRAQKRSVGSDE. A Phosphoserine modification is found at Ser-247. Thr-260 is modified (phosphothreonine). The interval 261-286 is disordered; that stretch reads LNQINKASPRRLPRKRAQKRSVGSDE. Ser-268 carries the phosphoserine modification. Over residues 268–279 the composition is skewed to basic residues; it reads SPRRLPRKRAQK.

Belongs to the TRAP-alpha family. In terms of assembly, heterotetramer of TRAP-alpha, TRAP-beta, TRAP-delta and TRAP-gamma. Interacts with palmitoylated calnexin (CALX), the interaction is required for efficient folding of glycosylated proteins. Post-translationally, phosphorylated in its cytoplasmic tail.

The protein resides in the endoplasmic reticulum membrane. TRAP proteins are part of a complex whose function is to bind calcium to the ER membrane and thereby regulate the retention of ER resident proteins. May be involved in the recycling of the translocation apparatus after completion of the translocation process or may function as a membrane-bound chaperone facilitating folding of translocated proteins. This Canis lupus familiaris (Dog) protein is Translocon-associated protein subunit alpha (SSR1).